The sequence spans 72 residues: Translation initiation factor IF-1 (72 aa).

Residues 1–72 (MAKDDVIEIE…TKGRITYRFK (72 aa)) enclose the S1-like domain.

The protein belongs to the IF-1 family. In terms of assembly, component of the 30S ribosomal translation pre-initiation complex which assembles on the 30S ribosome in the order IF-2 and IF-3, IF-1 and N-formylmethionyl-tRNA(fMet); mRNA recruitment can occur at any time during PIC assembly.

The protein localises to the cytoplasm. In terms of biological role, one of the essential components for the initiation of protein synthesis. Stabilizes the binding of IF-2 and IF-3 on the 30S subunit to which N-formylmethionyl-tRNA(fMet) subsequently binds. Helps modulate mRNA selection, yielding the 30S pre-initiation complex (PIC). Upon addition of the 50S ribosomal subunit IF-1, IF-2 and IF-3 are released leaving the mature 70S translation initiation complex. This chain is Translation initiation factor IF-1, found in Latilactobacillus sakei subsp. sakei (strain 23K) (Lactobacillus sakei subsp. sakei).